The following is a 469-amino-acid chain: Ribosomal protein uS12 methylthiotransferase RimO (469 aa).

Residues 17 to 132 (PRVGFVSLGC…VMDAVHLNLP (116 aa)) enclose the MTTase N-terminal domain. Cys-26, Cys-62, Cys-91, Cys-167, Cys-171, and Cys-174 together coordinate [4Fe-4S] cluster. One can recognise a Radical SAM core domain in the interval 153–395 (LTPKHYAYLK…AVAEEVSSLK (243 aa)). A TRAM domain is found at 397–469 (QQRVGATMQV…QGHDLVAIPV (73 aa)).

Belongs to the methylthiotransferase family. RimO subfamily. It depends on [4Fe-4S] cluster as a cofactor.

The protein resides in the cytoplasm. The enzyme catalyses L-aspartate(89)-[ribosomal protein uS12]-hydrogen + (sulfur carrier)-SH + AH2 + 2 S-adenosyl-L-methionine = 3-methylsulfanyl-L-aspartate(89)-[ribosomal protein uS12]-hydrogen + (sulfur carrier)-H + 5'-deoxyadenosine + L-methionine + A + S-adenosyl-L-homocysteine + 2 H(+). In terms of biological role, catalyzes the methylthiolation of an aspartic acid residue of ribosomal protein uS12. This chain is Ribosomal protein uS12 methylthiotransferase RimO, found in Polaromonas sp. (strain JS666 / ATCC BAA-500).